A 77-amino-acid chain; its full sequence is Large ribosomal subunit protein eL20 (77 aa).

The protein belongs to the eukaryotic ribosomal protein eL20 family. In terms of assembly, part of the 50S ribosomal subunit. Binds 23S rRNA.

This Thermococcus kodakarensis (strain ATCC BAA-918 / JCM 12380 / KOD1) (Pyrococcus kodakaraensis (strain KOD1)) protein is Large ribosomal subunit protein eL20.